A 962-amino-acid chain; its full sequence is RNA-binding protein 15 (962 aa).

Composition is skewed to basic and acidic residues over residues 1-10 (MRSAGREPLP), 34-52 (LRRD…ERSP), and 59-72 (RGGE…ERSK). The interval 1 to 167 (MRSAGREPLP…SAPGGGDGVE (167 aa)) is disordered. The segment covering 82 to 94 (GSSSGKTDSGGSR) has biased composition (low complexity). Basic and acidic residues predominate over residues 97–112 (LHLDKSSSRGGSREYE). A Phosphoserine modification is found at Ser108. Low complexity predominate over residues 118–129 (SSSRLHSYSSPS). Residues 134-149 (SGGGESRSSSRGGGGE) show a composition bias toward gly residues. The segment covering 150-159 (SRSSGAASSA) has biased composition (low complexity). Residues 169–251 (KTLKISELGS…RPLKIEAVYV (83 aa)) enclose the RRM 1 domain. 3 positions are modified to phosphoserine: Ser178, Ser207, and Ser209. Residue Lys245 forms a Glycyl lysine isopeptide (Lys-Gly) (interchain with G-Cter in SUMO2) linkage. A phosphoserine mark is found at Ser252, Ser256, and Ser258. The interval 257-297 (RSPLDKDAYAPSSSVVGTSVGSHRHAPGGGGGQRSLSPGGA) is disordered. Tyr265 is modified (phosphotyrosine). Over residues 268 to 277 (SSSVVGTSVG) the composition is skewed to low complexity. Ser291, Ser293, and Ser364 each carry phosphoserine. 2 consecutive RRM domains span residues 373–450 (RTLF…YGKA) and 454–528 (TRLW…FADT). Residues Lys405, Lys419, and Lys444 each participate in a glycyl lysine isopeptide (Lys-Gly) (interchain with G-Cter in SUMO2) cross-link. Lys449 carries the post-translational modification N6-acetyllysine. Basic and acidic residues-rich tracts occupy residues 553-580 (GHRA…RDLY) and 612-661 (SLDR…SERP). A disordered region spans residues 553-779 (GHRAPDPLRS…KQDGGTAPVA (227 aa)). Thr567 is subject to Phosphothreonine. Position 577 is an asymmetric dimethylarginine; alternate; by PRMT1 (Arg577). Arg577 carries the omega-N-methylarginine; alternate; by PRMT1 modification. Phosphoserine is present on residues Ser621, Ser655, Ser670, Ser674, and Ser701. Composition is skewed to basic and acidic residues over residues 673 to 692 (RSPE…DRSS), 701 to 729 (SPVR…AERD), and 742 to 751 (NPLKKEDRSD). Residue Lys745 forms a Glycyl lysine isopeptide (Lys-Gly) (interchain with G-Cter in SUMO2) linkage. Over residues 754 to 771 (APSASTSSSKQKPPSQKQ) the composition is skewed to low complexity. Ser768 and Ser782 each carry phosphoserine. The region spanning 778-957 (VAASSPKLCL…YLVMIIVRAK (180 aa)) is the SPOC domain. The segment at 866–885 (GSSDSRSSSSSATSDTAAST) is disordered. Low complexity predominate over residues 867–885 (SSDSRSSSSSATSDTAAST). Ser936 is modified (phosphoserine).

Belongs to the RRM Spen family. In terms of assembly, component of the WMM complex, a N6-methyltransferase complex composed of a catalytic subcomplex, named MAC, and of an associated subcomplex, named MACOM. The MAC subcomplex is composed of METTL3 and METTL14. The MACOM subcomplex is composed of WTAP, ZC3H13, CBLL1/HAKAI, VIRMA, and, in some cases of RBM15 (RBM15 or RBM15B). Also a component of a MACOM-like complex, named WTAP complex, composed of WTAP, ZC3H13, CBLL1, VIRMA, RBM15, BCLAF1 and THRAP3. Interacts with RBPJ. Interacts (via SPOC domain) with SETD1B. Interacts with NXF1, the interaction is required to promote mRNA export. Interacts with SF3B1. Methylated at Arg-577 by PRMT1, leading to promote ubiquitination by CNOT4 and subsequent degradation by the proteasome. Post-translationally, ubiquitinated by CNOT4 following methylation at Arg-577 by PRMT1.

It localises to the nucleus speckle. The protein resides in the nucleus. The protein localises to the nucleoplasm. Its subcellular location is the nucleus envelope. It is found in the nucleus membrane. RNA-binding protein that acts as a key regulator of N6-methyladenosine (m6A) methylation of RNAs, thereby regulating different processes, such as hematopoietic cell homeostasis, alternative splicing of mRNAs and X chromosome inactivation mediated by Xist RNA. Associated component of the WMM complex, a complex that mediates N6-methyladenosine (m6A) methylation of RNAs, a modification that plays a role in the efficiency of mRNA splicing and RNA processing. Plays a key role in m6A methylation, possibly by binding target RNAs and recruiting the WMM complex. Involved in random X inactivation mediated by Xist RNA: acts by binding Xist RNA and recruiting the WMM complex, which mediates m6A methylation, leading to target YTHDC1 reader on Xist RNA and promoting transcription repression activity of Xist. Required for the development of multiple tissues, such as the maintenance of the homeostasis of long-term hematopoietic stem cells and for megakaryocyte (MK) and B-cell differentiation. Regulates megakaryocyte differentiation by regulating alternative splicing of genes important for megakaryocyte differentiation; probably regulates alternative splicing via m6A regulation. Required for placental vascular branching morphogenesis and embryonic development of the heart and spleen. Acts as a regulator of thrombopoietin response in hematopoietic stem cells by regulating alternative splicing of MPL. May also function as an mRNA export factor, stimulating export and expression of RTE-containing mRNAs which are present in many retrotransposons that require to be exported prior to splicing. High affinity binding of pre-mRNA to RBM15 may allow targeting of the mRNP to the export helicase DBP5 in a manner that is independent of splicing-mediated NXF1 deposition, resulting in export prior to splicing. May be implicated in HOX gene regulation. This Mus musculus (Mouse) protein is RNA-binding protein 15.